Consider the following 57-residue polypeptide: Large ribosomal subunit protein eL20 (57 aa).

It belongs to the eukaryotic ribosomal protein eL20 family. As to quaternary structure, part of the 50S ribosomal subunit. Binds 23S rRNA.

The polypeptide is Large ribosomal subunit protein eL20 (Halorhabdus utahensis (strain DSM 12940 / JCM 11049 / AX-2)).